Reading from the N-terminus, the 397-residue chain is 2-isopropylmalate synthase 1 (397 aa).

Residues Val-6–Tyr-268 enclose the Pyruvate carboxyltransferase domain. Mn(2+) contacts are provided by Asp-15, His-203, His-205, and Asn-239.

It belongs to the alpha-IPM synthase/homocitrate synthase family. LeuA type 1 subfamily. As to quaternary structure, homodimer. Requires Mn(2+) as cofactor.

It localises to the cytoplasm. The enzyme catalyses 3-methyl-2-oxobutanoate + acetyl-CoA + H2O = (2S)-2-isopropylmalate + CoA + H(+). It participates in amino-acid biosynthesis; L-leucine biosynthesis; L-leucine from 3-methyl-2-oxobutanoate: step 1/4. Catalyzes the condensation of the acetyl group of acetyl-CoA with 3-methyl-2-oxobutanoate (2-ketoisovalerate) to form 3-carboxy-3-hydroxy-4-methylpentanoate (2-isopropylmalate). In Caldanaerobacter subterraneus subsp. tengcongensis (strain DSM 15242 / JCM 11007 / NBRC 100824 / MB4) (Thermoanaerobacter tengcongensis), this protein is 2-isopropylmalate synthase 1.